Here is a 314-residue protein sequence, read N- to C-terminus: Small ribosomal subunit protein uS2c (314 aa).

The protein belongs to the universal ribosomal protein uS2 family.

Its subcellular location is the plastid. It is found in the chloroplast. In Stigeoclonium helveticum (Green alga), this protein is Small ribosomal subunit protein uS2c (rps2).